The primary structure comprises 534 residues: Peptide chain release factor 3 (534 aa).

A tr-type G domain is found at 9–278 (ARRRTFAIIS…FFIEHAPPPQ (270 aa)). Residues 18 to 25 (SHPDAGKT), 86 to 90 (DTPGH), and 140 to 143 (NKLD) contribute to the GTP site.

This sequence belongs to the TRAFAC class translation factor GTPase superfamily. Classic translation factor GTPase family. PrfC subfamily.

Its subcellular location is the cytoplasm. Its function is as follows. Increases the formation of ribosomal termination complexes and stimulates activities of RF-1 and RF-2. It binds guanine nucleotides and has strong preference for UGA stop codons. It may interact directly with the ribosome. The stimulation of RF-1 and RF-2 is significantly reduced by GTP and GDP, but not by GMP. The polypeptide is Peptide chain release factor 3 (Xanthomonas oryzae pv. oryzae (strain PXO99A)).